The following is a 232-amino-acid chain: MTMAETGAPPSALALFAWLSPGFPVGAYAYSHALEWAAEAGDITDESSLESWLRDLMLLGFGRADGILLAHAYGAGAAGDVPALAQVNARAVALSPTAELRLETCQQGRSFLDAVRAAWPHGGLDAAAAHLPPDVAYPVAVGYAAALHGVPRAAVLEAYLFAVTQTLVSAALRIAPIGQTAGTRVVARLMPAVQALAGDIPTLTLDDLGTATFRADLGSMRHETQYTRLFRS.

Belongs to the UreF family. UreD, UreF and UreG form a complex that acts as a GTP-hydrolysis-dependent molecular chaperone, activating the urease apoprotein by helping to assemble the nickel containing metallocenter of UreC. The UreE protein probably delivers the nickel.

The protein localises to the cytoplasm. Its function is as follows. Required for maturation of urease via the functional incorporation of the urease nickel metallocenter. This chain is Urease accessory protein UreF, found in Azorhizobium caulinodans (strain ATCC 43989 / DSM 5975 / JCM 20966 / LMG 6465 / NBRC 14845 / NCIMB 13405 / ORS 571).